The primary structure comprises 110 residues: Secreted Ly-6/uPAR-related protein 1 (110 aa).

Residues 1–22 (MTLRWAMWLLLLAAWSMGYGEA) form the signal peptide. A UPAR/Ly6 domain is found at 24 to 73 (RCYTCEQPTAINSCKNIAQCKMEDTACKTVLETVEAAFPFNHSPMVTRSC). 5 disulfides stabilise this stretch: C25-C50, C28-C37, C43-C73, C77-C93, and C94-C99.

In terms of assembly, homodimer. Interacts with PLAU. Interacts with CHRNA7. Expressed in skin, eye, whole lung, trachea, esophagus and stomach. Widely expressed in various tissues including spleen and thymus but not pancreas. Expressed in macrophages, dendritic cells, T and B cells. Expressed in lung specifically in ciliated bronchial epithelial cells (at protein level). Expression is decreased in lungs of asthmatic model mice. Expressed in the cornea.

The protein localises to the secreted. Functionally, has an antitumor activity. Was found to be a marker of late differentiation of the skin. Implicated in maintaining the physiological and structural integrity of the keratinocyte layers of the skin. In vitro down-regulates keratinocyte proliferation; the function may involve the proposed role as modulator of nicotinic acetylcholine receptors (nAChRs) activity. In vitro inhibits alpha-7-dependent nAChR currents in an allosteric manner. In T cells may be involved in regulation of intracellular Ca(2+) signaling. Seems to have a immunomodulatory function in the cornea. The function may implicate a possible role as a scavenger receptor for PLAU thereby blocking PLAU-dependent functions of PLAUR such as in cell migration and proliferation. The polypeptide is Secreted Ly-6/uPAR-related protein 1 (Slurp1) (Mus musculus (Mouse)).